Here is a 474-residue protein sequence, read N- to C-terminus: Alkylcitrate dehydratase phiI (474 aa).

The protein belongs to the PrpD family. Monomer.

It carries out the reaction (4E,11E)-2-hydroxytrideca-4,11-dien-1,2,3-tricarboxylate + 2 H(+) = [4-(deca-1,8-diyl)-2,5-dioxo-2,5-dihydro-3-furanyl]acetate + 2 H2O. It participates in secondary metabolite biosynthesis. Functionally, alkylcitrate dehydratasee; part of the gene cluster that mediates the biosynthesis of the antihypercholesterolemic agents phomoidrides which are dimeric anhydrides. Within the pathway, the alkylcitrate synthase (ACS) tstiJ and the alkylcitrate dehydratase (ACDH) tstI produce the decarboxylated monomeric anhydrides by coupling the C12-fatty acyl product from phiA with oxalacetic acid. The pathway begins with the highly reducing polyketide synthase tstA that catalyzes the formation of a C12-fatty acyl-ACP, starting from one acetate and 5 malonate units. The hydrolase tstM is involved in the release of the C12-fatty acyl chain from phiA. The alkylcitrate synthase (ACS) tstJ and the alkylcitrate dehydratase (ACDH) tstI then give rise to decarboxylated monomeric anhydrides by coupling the C12-fatty acyl chain with oxalacetic acid. The cyclase tstC is responsible for the dimerization of the monomeric anhydrides which leads to the production of prephomoidride that contains the characteristic bicyclo[4.3.1]deca-1,6-diene system of phomoidrides. Iterative oxidation catalyzed by the alpha-ketoglutarate-dependent dioxygenase tstK produced then phomoidride A. Finally, the methyltransferase tstE converts phomoidride A to phomoidride B via an acetalization reaction. The phosphatidylethanolamine-binding protein tstB and tstN are not essential for dimerization and their functions have still to be determined. This chain is Alkylcitrate dehydratase phiI, found in Talaromyces stipitatus (strain ATCC 10500 / CBS 375.48 / QM 6759 / NRRL 1006) (Penicillium stipitatum).